Here is a 473-residue protein sequence, read N- to C-terminus: Siroheme synthase (473 aa).

Residues 1–222 are precorrin-2 dehydrogenase /sirohydrochlorin ferrochelatase; that stretch reads MNTQPHHSSP…GDESRADARL (222 aa). NAD(+) is bound by residues 37–38 and 58–59; these read EI and EK. Residues 233–473 form a uroporphyrinogen-III C-methyltransferase region; sequence GEVWLVGAGP…QVVRHRVVSP (241 aa). Position 242 (proline 242) interacts with S-adenosyl-L-methionine. Aspartate 265 serves as the catalytic Proton acceptor. Lysine 287 serves as the catalytic Proton donor. S-adenosyl-L-methionine contacts are provided by residues 318-320, isoleucine 323, 348-349, methionine 401, and glycine 430; these read GGD and SA.

In the N-terminal section; belongs to the precorrin-2 dehydrogenase / sirohydrochlorin ferrochelatase family. This sequence in the C-terminal section; belongs to the precorrin methyltransferase family.

The enzyme catalyses uroporphyrinogen III + 2 S-adenosyl-L-methionine = precorrin-2 + 2 S-adenosyl-L-homocysteine + H(+). It carries out the reaction precorrin-2 + NAD(+) = sirohydrochlorin + NADH + 2 H(+). The catalysed reaction is siroheme + 2 H(+) = sirohydrochlorin + Fe(2+). It participates in cofactor biosynthesis; adenosylcobalamin biosynthesis; precorrin-2 from uroporphyrinogen III: step 1/1. The protein operates within cofactor biosynthesis; adenosylcobalamin biosynthesis; sirohydrochlorin from precorrin-2: step 1/1. It functions in the pathway porphyrin-containing compound metabolism; siroheme biosynthesis; precorrin-2 from uroporphyrinogen III: step 1/1. Its pathway is porphyrin-containing compound metabolism; siroheme biosynthesis; siroheme from sirohydrochlorin: step 1/1. It participates in porphyrin-containing compound metabolism; siroheme biosynthesis; sirohydrochlorin from precorrin-2: step 1/1. Functionally, multifunctional enzyme that catalyzes the SAM-dependent methylations of uroporphyrinogen III at position C-2 and C-7 to form precorrin-2 via precorrin-1. Then it catalyzes the NAD-dependent ring dehydrogenation of precorrin-2 to yield sirohydrochlorin. Finally, it catalyzes the ferrochelation of sirohydrochlorin to yield siroheme. The protein is Siroheme synthase of Gluconobacter oxydans (strain 621H) (Gluconobacter suboxydans).